Reading from the N-terminus, the 397-residue chain is MPDSQSPNGSLFSRGMMAVIVAQFLSAFGDNALLFATLALLKQQFYPEWSQPVLQMVFVCAYILLAPFVGQVADSFSKGRVMMVANGLKLLGAVVIVFGGNPFVGYTLVGVGAAAYSPAKYGILGEITTGDRLVKANGLMESSTIAAILIGSMAGGMLADWHVGAALGVCALAYAGAVGANLLIPKLGAARPGQSWRFGPMTRSFFTACRTLWHNDETRFSLVGTSMFWGAGVTLRFLLVLWVPVALGITDNATPTYLNAMVAVGIVAGAGAAAKLVTLERVSRCMPAGILIGIAVIFFSLQQAALPAYLLLLLIGFFGGFFVVPLNALLQERGKRSVGAGNAIAVQNLGENTAMLLMLGLYSLAVKLSLPVVGIGVGFGAIFALAIAGLWLWRRKQ.

11 consecutive transmembrane segments (helical) span residues 16 to 36 (MMAV…LLFA), 53 to 73 (VLQM…GQVA), 91 to 111 (LGAV…LVGV), 139 to 159 (LMES…GMLA), 164 to 184 (GAAL…NLLI), 229 to 249 (WGAG…ALGI), 257 to 277 (YLNA…AKLV), 282 to 302 (VSRC…FSLQ), 304 to 324 (AALP…FFVV), 344 to 364 (IAVQ…LYSL), and 372 to 392 (VVGI…GLWL).

This sequence belongs to the major facilitator superfamily. LplT (TC 2.A.1.42) family.

Its subcellular location is the cell inner membrane. Its function is as follows. Catalyzes the facilitated diffusion of 2-acyl-glycero-3-phosphoethanolamine (2-acyl-GPE) into the cell. The protein is Lysophospholipid transporter LplT of Cronobacter sakazakii (strain ATCC BAA-894) (Enterobacter sakazakii).